The primary structure comprises 155 residues: Cell division protein SepF (155 aa).

Residues 22 to 46 (RYVEEPEQRDERPALEKGRAPKEKQ) show a composition bias toward basic and acidic residues. A disordered region spans residues 22–54 (RYVEEPEQRDERPALEKGRAPKEKQTAGMEQNQ).

It belongs to the SepF family. Homodimer. Interacts with FtsZ.

It is found in the cytoplasm. Its function is as follows. Cell division protein that is part of the divisome complex and is recruited early to the Z-ring. Probably stimulates Z-ring formation, perhaps through the cross-linking of FtsZ protofilaments. Its function overlaps with FtsA. This Shouchella clausii (strain KSM-K16) (Alkalihalobacillus clausii) protein is Cell division protein SepF.